The primary structure comprises 1250 residues: Protein SSD1 (1250 aa).

Polar residues predominate over residues 1–22 (MSKNSNVNNNRSQEPNNMFVQT). The tract at residues 1–32 (MSKNSNVNNNRSQEPNNMFVQTTGGGKNAPKQ) is disordered. Position 2 is an N-acetylserine (S2). Residue S40 is modified to Phosphoserine. The interval 79 to 163 (TGQYLSGNSG…SSIYGHSRRH (85 aa)) is disordered. Residues 84 to 94 (SGNSGSNNHFT) are compositionally biased toward polar residues. Residues 124 to 145 (NNSGYYHNSYDNNNNSNNPGSN) are compositionally biased toward low complexity. 2 positions are modified to phosphoserine: S164 and S183. Residues 197-208 (QADSGSNSTTEQ) show a composition bias toward polar residues. Disordered regions lie at residues 197–338 (QADS…GGRK), 418–443 (KEKE…SSDD), and 455–517 (SNNF…DDVE). At T227 the chain carries Phosphothreonine. The segment covering 264-276 (NEYSPGINSNWRN) has biased composition (polar residues). Over residues 277–287 (QSQQPQQQLSP) the composition is skewed to low complexity. S286 and S322 each carry phosphoserine. Positions 319-329 (SNSSVHSFSSQ) are enriched in polar residues. Polar residues predominate over residues 481–495 (STINNDSDSLSSPTK). A phosphoserine mark is found at S491 and S492. Positions 497 to 510 (GVRRRSSLKQRPTQ) are enriched in basic residues. Positions 582–657 (AWFKPTDKKV…EIDSILRDNN (76 aa)) constitute a CSD2 domain. Y688 bears the Phosphotyrosine mark. The 322-residue stretch at 694 to 1015 (DTNEYNIFAI…VHRQLKAVIH (322 aa)) folds into the RNB domain. The DIS3L2 C-terminal domain occupies 1064-1148 (GQLLTMATVL…SIKNKFRSTA (85 aa)).

The protein belongs to the RNR ribonuclease family.

Functionally, can suppress the lethality due to deletion of SIT4, and partially the defects due to BCY1 disruption. Is implicated in the control of the cell cycle G1 phase. The sequence is that of Protein SSD1 (SSD1) from Saccharomyces cerevisiae (strain ATCC 204508 / S288c) (Baker's yeast).